The sequence spans 1056 residues: MMGDYRLPDHPQPMEILNLYLGDSLEPHPGECPRETCSHEDPPEPFEEQTWATDPPEPTRQNVPPWGSGVELTHLGSWVHQDGLEPCQEQTRATDPPESTRQDAPPWGSGVELTHLGSPSAQREHRQNTASPGSPVNSHLPGSPKQNRSTSTQVVFWAGILQAQMCVLDLEEELEKTEGLKAGLKCCLPTPPVDLPGDTGLHSSPPENEDSGEDSSEPEGEGQAWLREGTPDSSPQWGAEEESMFFSNPLFLASPCSENSASGECFSWGASDSHAGVRTGPESPATLEPPLPEDTVLWELESEPDLGDGAAISGHCTPPFPVPIYKPHSICWASVAAAEGAPAAPPGHGESEGDRLGPAPSAAPCVDEALTWESGCVGSDLGPAAHPVQPWASLSPEGWQRGGPFWPQVTLNSQDRDEREGGHPQESLPCTLAPCPWRSPASSPEPSSPESESRGPGPRPSPASSQEGSPQLQHHSSGILPKWTLDASQSSLLETDGEQPSSLKKKEAGEAPKPGEEVKSEGTARPAETGDVQPDIHLTSAEHENLRTPMNSSWLPGSPMPQAQSPEEGQRPPAGDKLANGVRNNKVAWNLASRLYRLEGFRKSEVAAYLQKNNDFSRAVAEEYLSFFQFGGQSLDRALRSFLQALVLSGETQERERILYQFSRRFHHCNPGIFPSVDSVHTLTCAIMLLNTDLHGQNIGKSMSCQEFITNLNGLRDGGNFPKELLKALYWSIRSEKLEWAVDEEDTARPEKAQPSLPAGKMSKPFLQLAQDPTVPTYKQGILARKMHQDADGKKTPWGKRGWKMFHTLLRGMVLYFLKQGEDHCLEGESLVGQMVDEPVGVHHSLATPATHYTKKPHVFQLRTADWRLYLFQAPTAKEMSSWIARINLAAATHSAPPFPAAVGSQRRFVRPILPVGPAQSSLEEQHRSHENCLDAAADDLLDLQRNLPERRGRGRELEEHRLRKEYLEYEKTRYETYVQLLVARLHCPSDALDLWEEQLGREAGGTREPKLSLKKSHSSPSLHQDEAPTTAKVKRNISERRTYRKIIPKRNRNQL.

The span at 25 to 42 (LEPHPGECPRETCSHEDP) shows a compositional bias: basic and acidic residues. Disordered regions lie at residues 25 to 71 (LEPH…SGVE), 87 to 149 (CQEQ…QNRS), 195 to 239 (LPGD…QWGA), 340 to 362 (GAPA…APSA), 388 to 533 (VQPW…GDVQ), and 546 to 581 (LRTP…LANG). 2 stretches are compositionally biased toward polar residues: residues 88–99 (QEQTRATDPPES) and 128–137 (NTASPGSPVN). Residues Ser-131, Ser-134, and Ser-143 each carry the phosphoserine modification. Residues 207–220 (ENEDSGEDSSEPEG) are compositionally biased toward acidic residues. Ser-413 is modified (phosphoserine). Basic and acidic residues predominate over residues 414–423 (QDRDEREGGH). The span at 438 to 456 (RSPASSPEPSSPESESRGP) shows a compositional bias: low complexity. A phosphoserine mark is found at Ser-448, Ser-469, and Ser-491. Polar residues-rich tracts occupy residues 466–476 (QEGSPQLQHHS) and 486–502 (DASQ…QPSS). Residues 504 to 522 (KKKEAGEAPKPGEEVKSEG) are compositionally biased toward basic and acidic residues. One can recognise an SEC7 domain in the interval 544 to 736 (ENLRTPMNSS…KALYWSIRSE (193 aa)). The span at 548–567 (TPMNSSWLPGSPMPQAQSPE) shows a compositional bias: polar residues. The region spanning 776-892 (PTYKQGILAR…WIARINLAAA (117 aa)) is the PH domain. The stretch at 921–976 (SSLEEQHRSHENCLDAAADDLLDLQRNLPERRGRGRELEEHRLRKEYLEYEKTRYE) forms a coiled coil. The disordered stretch occupies residues 1004–1056 (AGGTREPKLSLKKSHSSPSLHQDEAPTTAKVKRNISERRTYRKIIPKRNRNQL). 2 positions are modified to phosphoserine: Ser-1019 and Ser-1022. Residues 1043 to 1056 (TYRKIIPKRNRNQL) show a composition bias toward basic residues.

As to expression, widely expressed. Highest levels of expression are found in placenta, pancreas, spleen, thymus and peripheral blood.

The protein localises to the cell membrane. Its subcellular location is the cell projection. The protein resides in the ruffle membrane. Functionally, guanine nucleotide exchange factor for ARF6 and ARL14/ARF7. Through ARL14 activation, controls the movement of MHC class II-containing vesicles along the actin cytoskeleton in dendritic cells. Involved in membrane recycling. Interacts with several phosphatidylinositol phosphate species, including phosphatidylinositol 3,4-bisphosphate, phosphatidylinositol 3,5-bisphosphate and phosphatidylinositol 4,5-bisphosphate. The sequence is that of PH and SEC7 domain-containing protein 4 (PSD4) from Homo sapiens (Human).